Reading from the N-terminus, the 1507-residue chain is Transient receptor potential cation channel subfamily M member 2 (1507 aa).

Residues 1–11 (MEPLDQRRTDS) are compositionally biased toward basic and acidic residues. The tract at residues 1-24 (MEPLDQRRTDSDQEEGFGVQSRRA) is disordered. Residues 1–751 (MEPLDQRRTD…WWGQLCVDNG (751 aa)) lie on the Cytoplasmic side of the membrane. ADP-D-ribose-binding residues include T173, N178, R301, G332, and T335. Position 739 is a phosphothreonine (T739). An intramembrane segment occupies 752 to 768 (LWRIILCMLAFPLLFTG). The Cytoplasmic segment spans residues 769–793 (FISFREKRLQALCRLARVRAFFNAP). A helical membrane pass occupies residues 794 to 814 (VVIFYLNILSYFAFLCLFAYV). Residues 815–825 (LMVDFQPSPSW) lie on the Extracellular side of the membrane. A helical membrane pass occupies residues 826–846 (CEYLIYLWLFSLVCEETRQLF). Ca(2+) is bound by residues E841 and Q844. The Cytoplasmic segment spans residues 847 to 865 (YDPDGCGLMKMASLYFSDF). A helical membrane pass occupies residues 866 to 886 (WNKLDVGAILLFIAGLTCRLI). A Ca(2+)-binding site is contributed by N867. At 887–894 (PATLYPGR) the chain is on the extracellular side. The helical transmembrane segment at 895–915 (IILSLDFIMFCLRLMHIFTIS) threads the bilayer. At 916-927 (KTLGPKIIIVKR) the chain is on the cytoplasmic side. A helical transmembrane segment spans residues 928–948 (MMKDVFFFLFLLAVWVVSFGV). The Extracellular segment spans residues 949-968 (AKQAILIHNESRVDWIFRGV). Residues 969–983 (IYHSYLTIFGQIPTY) constitute an intramembrane region (pore-forming). The short motif at 977-980 (FGQI) is the Selectivity filter element. Over 984–1020 (IDGVNFSMDQCSPNGTDPYKPKCPESDWTGQAPAFPE) the chain is Extracellular. A disulfide bridge connects residues C994 and C1006. Residues 1021–1042 (WLTVTLLCLYLLFANILLLNLL) form a helical membrane-spanning segment. Topologically, residues 1043–1077 (IAMFNYTFQEVQEHTDQIWKFQRHDLIEEYHGRPP) are cytoplasmic. E1071 is a binding site for Ca(2+). The stretch at 1078 to 1096 (APPPLILLSHLQLLIKRIV) is an intramembrane region. The Cytoplasmic segment spans residues 1097–1507 (LKIPAKRHKQ…KVASLFGAHF (411 aa)). Residues 1351 to 1502 (RWKRNQGGGI…KKILQKVASL (152 aa)) form the Nudix hydrolase domain. S1379 contacts ADP-D-ribose. Residues 1387–1408 (GSREPGKMLPRKLKQVLQQEYW) carry the Nudix box motif. D1428, R1430, Y1489, and N1491 together coordinate ADP-D-ribose.

It belongs to the transient receptor (TC 1.A.4) family. LTrpC subfamily. TRPM2 sub-subfamily. Homotetramer. In terms of processing, phosphorylation of TRPM2 at Thr-739 by protein kinase C (PKC) counteracts the effect of cytosolic Ca(2+) and elevates the temperature threshold. As to expression, detected in pancreas beta-cells. Detected in fetal brain cortex neurons (at protein level).

It is found in the cell membrane. Its subcellular location is the perikaryon. The protein localises to the cell projection. It localises to the cytoplasmic vesicle. The protein resides in the lysosome. The catalysed reaction is Ca(2+)(in) = Ca(2+)(out). The enzyme catalyses Na(+)(in) = Na(+)(out). Activated by intracellular ADP-ribose, beta-NAD (NAD(+)) and similar compounds, and by oxidative stress caused by reactive oxygen or nitrogen species. Ca(2+) and PI(4,5)P2 are required for channel opening by ADP-ribose. Activation by ADP-ribose and beta-NAD is strongly increased by moderate heat (35 to 40 degrees Celsius). Likewise, reactive oxygen species lower the threshold for activation by moderate heat (37 degrees Celsius). Activated by moderate heat (35 to 40 degrees Celsius). Inactivated by exposure to extracellular pH between 4.0 and 6.5; irreversibly inactivated when open channels are exposed to extracellular pH between 4.0 and 6.5, while pre-exposure of closed channels to extracellular pH 5.5 gives rise to currents that rapidly inactivate, but protects against irreversible inactivation. Inactivated by intracellular ATP. Activated by arachidonic acid. Inhibited by 2-aminoethyl diphenylborinate (2-APB). Nonselective, voltage-independent cation channel that mediates Na(+) and Ca(2+) influx, leading to increased cytoplasmic Ca(2+) levels. Functions as a ligand-gated ion channel gated by intracellular adenosine diphosphate ribose (ADP-ribose), Ca(2+), warm temperature, and oxidative stress. The precise physiological activators are under debate; the true, physiological activators may be ADP-ribose and ADP-ribose-2'-phosphate. Binding of ADP-ribose to the cytoplasmic Nudix domain causes a conformation change; the channel is primed but still requires Ca(2+) binding to trigger channel opening. Extracellular Ca(2+) passes through the channel and increases channel activity. Also contributes to Ca(2+) release from intracellular stores in response to ADP-ribose. Plays a role in numerous processes that involve signaling via intracellular Ca(2+) levels. Besides, mediates the release of lysosomal Zn(2+) stores in response to reactive oxygen species, leading to increased cytosolic Zn(2+) levels. Plays a role in insulin secretion, a process that requires increased cytoplasmic Ca(2+) levels. Required for normal IFNG and cytokine secretion and normal innate immune immunity in response to bacterial infection. Required for normal phagocytosis and cytokine release by macrophages exposed to zymosan (in vitro). Plays a role in dendritic cell differentiation and maturation, and in dendritic cell chemotaxis via its role in regulating cytoplasmic Ca(2+) levels. Plays a role in the regulation of the reorganization of the actin cytoskeleton and filopodia formation in response to reactive oxygen species via its function in increasing cytoplasmic Ca(2+) and Zn(2+) levels. Confers susceptibility to cell death following oxidative stress. The polypeptide is Transient receptor potential cation channel subfamily M member 2 (Rattus norvegicus (Rat)).